We begin with the raw amino-acid sequence, 236 residues long: Small ribosomal subunit protein uS2c (236 aa).

This sequence belongs to the universal ribosomal protein uS2 family.

The protein resides in the plastid. The protein localises to the chloroplast. The sequence is that of Small ribosomal subunit protein uS2c (rps2) from Platanus occidentalis (Sycamore).